The following is an 89-amino-acid chain: Small ribosomal subunit protein uS14 (89 aa).

The protein belongs to the universal ribosomal protein uS14 family. Part of the 30S ribosomal subunit. Contacts proteins S3 and S10.

Its function is as follows. Binds 16S rRNA, required for the assembly of 30S particles and may also be responsible for determining the conformation of the 16S rRNA at the A site. This Cytophaga hutchinsonii (strain ATCC 33406 / DSM 1761 / CIP 103989 / NBRC 15051 / NCIMB 9469 / D465) protein is Small ribosomal subunit protein uS14.